Reading from the N-terminus, the 548-residue chain is Chaperonin GroEL (548 aa).

ATP is bound by residues 30 to 33 (TLGP), K51, 87 to 91 (DGTTT), G415, and D496. Residues 527-548 (SDKEDAMPPMRGGMGGMGGMDF) are disordered. Over residues 538-548 (GGMGGMGGMDF) the composition is skewed to gly residues.

The protein belongs to the chaperonin (HSP60) family. In terms of assembly, forms a cylinder of 14 subunits composed of two heptameric rings stacked back-to-back. Interacts with the co-chaperonin GroES.

It is found in the cytoplasm. The catalysed reaction is ATP + H2O + a folded polypeptide = ADP + phosphate + an unfolded polypeptide.. Functionally, together with its co-chaperonin GroES, plays an essential role in assisting protein folding. The GroEL-GroES system forms a nano-cage that allows encapsulation of the non-native substrate proteins and provides a physical environment optimized to promote and accelerate protein folding. The sequence is that of Chaperonin GroEL from Rickettsia akari (strain Hartford).